We begin with the raw amino-acid sequence, 190 residues long: Protein GrpE (190 aa).

Positions 1–33 (MSEQEKDQNNAEPQVETVEEQQAAAAAEAVEPT) are disordered. A compositionally biased stretch (low complexity) spans 11–32 (AEPQVETVEEQQAAAAAEAVEP).

It belongs to the GrpE family. In terms of assembly, homodimer.

The protein localises to the cytoplasm. Functionally, participates actively in the response to hyperosmotic and heat shock by preventing the aggregation of stress-denatured proteins, in association with DnaK and GrpE. It is the nucleotide exchange factor for DnaK and may function as a thermosensor. Unfolded proteins bind initially to DnaJ; upon interaction with the DnaJ-bound protein, DnaK hydrolyzes its bound ATP, resulting in the formation of a stable complex. GrpE releases ADP from DnaK; ATP binding to DnaK triggers the release of the substrate protein, thus completing the reaction cycle. Several rounds of ATP-dependent interactions between DnaJ, DnaK and GrpE are required for fully efficient folding. The protein is Protein GrpE of Alcanivorax borkumensis (strain ATCC 700651 / DSM 11573 / NCIMB 13689 / SK2).